The following is a 687-amino-acid chain: Calcium-binding protein SP84 (687 aa).

A signal peptide spans 1 to 19 (MMRAIYLLVVVCWAAAANA). EF-hand domains lie at 152–187 (LESDDITKFYKHLDNDKDNELKTEEVLKIQHTHKNK), 257–292 (LTEIDISLLYRSVDTNNDNKIIIDELKAFTGITDDV), 406–441 (KTEATVTRYMVEADIDKDSFICLEEFDEYMDIPHMV), 476–511 (IENAAFDTWFNHYDTNHNNKIEKEADGLLAKFNNDA), and 579–614 (MTERDIEDLFDELDHNDDHELTQQDFPDCWNDVKDL). Residues Asp-592, Asn-594, Asp-596, Glu-598, and Asp-603 each coordinate Ca(2+).

Expressed in salivary glands where expression is strongest in type III cells in the posterior lobe of the principal glands (at protein level). Not expressed in midgut, Malpighian tubules or epidermis.

It is found in the secreted. Functionally, binds calcium. During feeding of the phloem sap, protein is injected into sieve tubes of rice plants. This process may suppress the sieve-element clogging and facilitate continuous ingestion from sieve tubes. This is Calcium-binding protein SP84 from Nephotettix cincticeps (Green rice leafhopper).